Here is a 445-residue protein sequence, read N- to C-terminus: NADH-quinone oxidoreductase subunit F (445 aa).

61-70 is a binding site for NAD(+); it reads GRGGAGFATG. Position 177–224 (177–224) interacts with FMN; that stretch reads GAGAYICGEETALLDSLEGRRGQPRLRPPFPAVAGLYGCPTVINNVET. [4Fe-4S] cluster is bound by residues Cys-353, Cys-356, Cys-359, and Cys-399.

Belongs to the complex I 51 kDa subunit family. It depends on FMN as a cofactor. [4Fe-4S] cluster serves as cofactor.

It carries out the reaction a quinone + NADH + 5 H(+)(in) = a quinol + NAD(+) + 4 H(+)(out). Functionally, NDH-1 shuttles electrons from NADH, via FMN and iron-sulfur (Fe-S) centers, to quinones in the respiratory chain. The immediate electron acceptor for the enzyme in this species is believed to be menaquinone. Couples the redox reaction to proton translocation (for every two electrons transferred, four hydrogen ions are translocated across the cytoplasmic membrane), and thus conserves the redox energy in a proton gradient. This is NADH-quinone oxidoreductase subunit F (nuoF) from Mycobacterium bovis (strain ATCC BAA-935 / AF2122/97).